A 970-amino-acid polypeptide reads, in one-letter code: Transposase for insertion sequence element IS1071 in transposon Tn5271 (970 aa).

The protein belongs to the transposase 7 family.

Functionally, required for transposition of transposon Tn5271. The polypeptide is Transposase for insertion sequence element IS1071 in transposon Tn5271 (Comamonas testosteroni (Pseudomonas testosteroni)).